The sequence spans 62 residues: UPF0434 protein ABO_2103 (62 aa).

Belongs to the UPF0434 family.

In Alcanivorax borkumensis (strain ATCC 700651 / DSM 11573 / NCIMB 13689 / SK2), this protein is UPF0434 protein ABO_2103.